The following is a 169-amino-acid chain: UPF0303 protein BruAb1_1406 (169 aa).

This sequence belongs to the UPF0303 family.

The chain is UPF0303 protein BruAb1_1406 from Brucella abortus biovar 1 (strain 9-941).